The sequence spans 320 residues: Malate dehydrogenase (320 aa).

Residues 10 to 15 and D34 contribute to the NAD(+) site; that span reads GAGQIG. 2 residues coordinate substrate: R83 and R89. Residues N96 and 119-121 each bind NAD(+); that span reads ITN. N121 and R152 together coordinate substrate. Catalysis depends on H176, which acts as the Proton acceptor.

This sequence belongs to the LDH/MDH superfamily. MDH type 3 family.

It catalyses the reaction (S)-malate + NAD(+) = oxaloacetate + NADH + H(+). Catalyzes the reversible oxidation of malate to oxaloacetate. This chain is Malate dehydrogenase, found in Methylorubrum extorquens (strain CM4 / NCIMB 13688) (Methylobacterium extorquens).